A 208-amino-acid polypeptide reads, in one-letter code: Thiamine-phosphate synthase (208 aa).

Residues glutamine 37–lysine 41 and asparagine 73 each bind 4-amino-2-methyl-5-(diphosphooxymethyl)pyrimidine. Positions 74 and 93 each coordinate Mg(2+). Serine 112 is a binding site for 4-amino-2-methyl-5-(diphosphooxymethyl)pyrimidine. Threonine 139 to serine 141 serves as a coordination point for 2-[(2R,5Z)-2-carboxy-4-methylthiazol-5(2H)-ylidene]ethyl phosphate. A 4-amino-2-methyl-5-(diphosphooxymethyl)pyrimidine-binding site is contributed by lysine 142. 2-[(2R,5Z)-2-carboxy-4-methylthiazol-5(2H)-ylidene]ethyl phosphate-binding positions include glycine 171 and isoleucine 191–serine 192.

The protein belongs to the thiamine-phosphate synthase family. Mg(2+) is required as a cofactor.

It carries out the reaction 2-[(2R,5Z)-2-carboxy-4-methylthiazol-5(2H)-ylidene]ethyl phosphate + 4-amino-2-methyl-5-(diphosphooxymethyl)pyrimidine + 2 H(+) = thiamine phosphate + CO2 + diphosphate. The catalysed reaction is 2-(2-carboxy-4-methylthiazol-5-yl)ethyl phosphate + 4-amino-2-methyl-5-(diphosphooxymethyl)pyrimidine + 2 H(+) = thiamine phosphate + CO2 + diphosphate. It catalyses the reaction 4-methyl-5-(2-phosphooxyethyl)-thiazole + 4-amino-2-methyl-5-(diphosphooxymethyl)pyrimidine + H(+) = thiamine phosphate + diphosphate. It participates in cofactor biosynthesis; thiamine diphosphate biosynthesis; thiamine phosphate from 4-amino-2-methyl-5-diphosphomethylpyrimidine and 4-methyl-5-(2-phosphoethyl)-thiazole: step 1/1. Its function is as follows. Condenses 4-methyl-5-(beta-hydroxyethyl)thiazole monophosphate (THZ-P) and 2-methyl-4-amino-5-hydroxymethyl pyrimidine pyrophosphate (HMP-PP) to form thiamine monophosphate (TMP). The polypeptide is Thiamine-phosphate synthase (Listeria welshimeri serovar 6b (strain ATCC 35897 / DSM 20650 / CCUG 15529 / CIP 8149 / NCTC 11857 / SLCC 5334 / V8)).